We begin with the raw amino-acid sequence, 293 residues long: Glycine N-methyltransferase (293 aa).

Valine 2 bears the N-acetylvaline mark. 2 residues coordinate (6S)-5-methyl-5,6,7,8-tetrahydrofolate: serine 4 and tyrosine 6. Position 10 is a phosphoserine (serine 10). 4 residues coordinate S-adenosyl-L-methionine: tyrosine 22, tryptophan 31, tyrosine 34, and arginine 41. Tyrosine 34 is subject to Phosphotyrosine. Residue lysine 46 is modified to N6-succinyllysine. S-adenosyl-L-methionine contacts are provided by residues alanine 65, aspartate 86 to serine 88, asparagine 117 to tryptophan 118, leucine 137 to serine 140, and arginine 176. Residues lysine 191, lysine 196, and lysine 201 each carry the N6-succinyllysine modification. Histidine 215 contacts (6S)-5-methyl-5,6,7,8-tetrahydrofolate. Tyrosine 221 is a binding site for S-adenosyl-L-methionine. Arginine 240 serves as a coordination point for (6S)-5-methyl-5,6,7,8-tetrahydrofolate.

It belongs to the class I-like SAM-binding methyltransferase superfamily. Glycine N-methyltransferase family. Homotetramer. As to expression, abundant in liver.

The protein resides in the cytoplasm. It carries out the reaction glycine + S-adenosyl-L-methionine = sarcosine + S-adenosyl-L-homocysteine + H(+). Inhibited by 5-methyltetrahydrofolate monoglutamate and by 5-methyltetrahydrofolate pentaglutamate, inhibition is much more effective by the pentaglutamate form than by the monoglutamate form. Two molecules of 5-methyltetrahydrofolate are bound per tetramer. The binding sites are localized between subunits. Inhibitor binding may preclude movements of the polypeptide chain that are necessary for enzyme activity. Catalyzes the methylation of glycine by using S-adenosylmethionine (AdoMet) to form N-methylglycine (sarcosine) with the concomitant production of S-adenosylhomocysteine (AdoHcy), a reaction regulated by the binding of 5-methyltetrahydrofolate. Possible crucial role in the regulation of tissue concentration of AdoMet and of metabolism of methionine. This Rattus norvegicus (Rat) protein is Glycine N-methyltransferase (Gnmt).